Consider the following 124-residue polypeptide: uncharacterized protein (124 aa).

This is an uncharacterized protein from Schizosaccharomyces pombe (strain 972 / ATCC 24843) (Fission yeast).